The chain runs to 320 residues: Serpentine receptor class gamma-15 (320 aa).

The next 7 helical transmembrane spans lie at 29–49 (TISYLIPGGILHLFILHTILV), 57–77 (GSSFFAIFALDSVSSIIIVFI), 85–105 (FLYVPPLCPIVGPFFWASSLI), 151–171 (VSLVIICILPLGGTWNIIISP), 197–217 (LFQSIYILTALVFTFICTSVT), 240–260 (IYISLTFLAAAASQALYAFCT), and 268–288 (LFTAQFLAFDMFTVGSAVILF).

The protein belongs to the nematode receptor-like protein srg family.

It localises to the membrane. The protein is Serpentine receptor class gamma-15 (srg-15) of Caenorhabditis elegans.